Reading from the N-terminus, the 727-residue chain is 1,4-alpha-glucan branching enzyme GlgB (727 aa).

Aspartate 405 functions as the Nucleophile in the catalytic mechanism. Glutamate 458 (proton donor) is an active-site residue.

It belongs to the glycosyl hydrolase 13 family. GlgB subfamily. As to quaternary structure, monomer.

The catalysed reaction is Transfers a segment of a (1-&gt;4)-alpha-D-glucan chain to a primary hydroxy group in a similar glucan chain.. It participates in glycan biosynthesis; glycogen biosynthesis. In terms of biological role, catalyzes the formation of the alpha-1,6-glucosidic linkages in glycogen by scission of a 1,4-alpha-linked oligosaccharide from growing alpha-1,4-glucan chains and the subsequent attachment of the oligosaccharide to the alpha-1,6 position. The sequence is that of 1,4-alpha-glucan branching enzyme GlgB from Yersinia pseudotuberculosis serotype I (strain IP32953).